We begin with the raw amino-acid sequence, 421 residues long: Calreticulin (421 aa).

The N-terminal stretch at 1-22 is a signal peptide; it reads MAFRVPNSSLLSLILLSLLAIA. N-linked (GlcNAc...) asparagine glycosylation is present at Asn-56. Residues Cys-110 and Cys-142 are joined by a disulfide bond. An alpha-D-glucoside contacts are provided by Tyr-114, Lys-116, Tyr-133, and Asp-140. N-linked (GlcNAc...) asparagine glycosylation occurs at Asn-156. Tandem repeats lie at residues 196–207, 215–226, 232–243, 250–261, 265–275, 279–289, and 293–303. The tract at residues 196 to 261 is 4 X approximate repeats; it reads KQTGSLYSDW…DAKKPEDWDD (66 aa). The interval 217–283 is disordered; that stretch reads EAKKPEDWED…NPEYKGEWKP (67 aa). Positions 223 to 232 are enriched in acidic residues; the sequence is DWEDQEYIPD. A compositionally biased stretch (basic and acidic residues) spans 233 to 257; it reads PEDKKPEGYDDIPKEITDPDAKKPE. The tract at residues 265–303 is 3 X approximate repeats; sequence GEWTAPTIPNPEYKGEWKPKKIKNPNFKGKWKAPLIDNP. Glu-323 contributes to the an alpha-D-glucoside binding site. Over residues 350–380 the composition is skewed to basic and acidic residues; the sequence is EETWGKQKDAEKAAFEELEKKLQEEESKEDP. The disordered stretch occupies residues 350-421; the sequence is EETWGKQKDA…ETEAEKHDEL (72 aa). Residues 381–399 are compositionally biased toward acidic residues; the sequence is VDSDAEDDDNEAEDGEESD. The Prevents secretion from ER motif lies at 418-421; that stretch reads HDEL.

The protein belongs to the calreticulin family.

The protein localises to the endoplasmic reticulum lumen. Functionally, molecular calcium-binding chaperone promoting folding, oligomeric assembly and quality control in the ER via the calreticulin/calnexin cycle. This lectin may interact transiently with almost all of the monoglucosylated glycoproteins that are synthesized in the ER. The protein is Calreticulin of Prunus armeniaca (Apricot).